Consider the following 340-residue polypeptide: Nuclear hormone receptor family member nhr-268 (340 aa).

A DNA-binding region (nuclear receptor) is located at residues M1 to D75. 2 consecutive NR C4-type zinc fingers follow at residues C3–C23 and C39–C58. One can recognise an NR LBD domain in the interval K98–H337.

Belongs to the nuclear hormone receptor family.

The protein resides in the nucleus. Orphan nuclear receptor. The chain is Nuclear hormone receptor family member nhr-268 (nhr-268) from Caenorhabditis elegans.